We begin with the raw amino-acid sequence, 440 residues long: Tetratricopeptide repeat protein 5 (440 aa).

TPR repeat units follow at residues glutamate 7 to valine 61, alanine 68 to leucine 98, valine 103 to leucine 130, lysine 136 to methionine 174, and glycine 179 to valine 216. Residues leucine 13–tyrosine 24 carry the Nuclear export signal motif. Serine 203 bears the Phosphoserine; by ATM mark. Serine 221 carries the phosphoserine; by CHEK2 modification. Residues proline 224–leucine 253 form a TPR 6 repeat. Residues lysine 285 to lysine 287 are mediates interaction with 28S rRNA of ribosome-coding tubulin.

In terms of assembly, interacts with JMY and p300/EP300; the interaction occurs in the nucleus and augments the association between JMY and p300/EP300 in response to DNA damage. Forms a complex with HSF1 and p300/EP300; these interactions augment chromatin-bound HSF1 and p300/EP300 histone acetyltransferase activity, resulting in enhanced heat-shock-responsive transcription. Interacts with PRMT5; the interaction is DNA damage-dependent and promotes PRMT5 interaction with p53/TP53 and subsequent methylation. Interacts with JMY; the interaction occurs in the cytoplasm and results in the inhibition of JYM's nucleation activity. Interacts with ribosome-coding tubulin (via 60S subunit 28S rRNA and protein uL24/RPL26) and the N-terminal of nascent tubulin polypeptide (via alpha-tubulin MREC motif and beta-tubulin MREI motif); these interactions result in tubulin mRNA-targeted degradation. Interacts with ATP5F1B; the interaction occurs in the mitochondria and results in ATP production decrease. Interacts with p53/TP53; the interaction occurs in the mitochondria and results in increased apoptosis. Phosphorylation by ATM kinase induces nuclear accumulation while interfering with nuclear export, and phosphorylation by CHEK2 kinase enhances nuclear stability.

The protein resides in the nucleus. It localises to the cytoplasm. Its subcellular location is the cytoplasmic vesicle. It is found in the mitochondrion matrix. In terms of biological role, cofactor involved in the regulation of various cellular mechanisms such as actin regulation, autophagy, chromatin regulation and DNA repair. In non-stress conditions, interacts with cofactor JMY in the cytoplasm which prevents JMY's actin nucleation activity and ability to activate the Arp2/3 complex. Acts as a negative regulator of nutrient stress-induced autophagy by preventing JMY's interaction with MAP1LC3B, thereby preventing autophagosome formation. Involves in tubulin autoregulation by promoting its degradation in response to excess soluble tubulin. To do so, associates with the active ribosome near the ribosome exit tunnel and with nascent tubulin polypeptides early during their translation, triggering tubulin mRNA-targeted degradation. Following DNA damage, phosphorylated by DNA damage responsive protein kinases ATM and CHEK2, leading to its nuclear accumulation and stability. Nuclear TTC5/STRAP promotes the assembly of a stress-responsive p53/TP53 coactivator complex, which includes the coactivators JMY and p300, thereby increasing p53/TP53-dependent transcription and apoptosis. Also recruits arginine methyltransferase PRMT5 to p53/TP53 when DNA is damaged, allowing PRMT5 to methylate p53/TP53. In DNA stress conditions, also prevents p53/TP53 degradation by E3 ubiquitin ligase MDM2. Upon heat-shock stress, forms a chromatin-associated complex with heat-shock factor 1 HSF1 and p300/EP300 to stimulate heat-shock-responsive transcription, thereby increasing cell survival. Mitochondrial TTC5/STRAP interacts with ATP synthase subunit beta ATP5F1B which decreased ATP synthase activity and lowers mitochondrial ATP production, thereby regulating cellular respiration and mitochondrial-dependent apoptosis. Mitochondrial TTC5/STRAP also regulates p53/TP53-mediated apoptosis. The polypeptide is Tetratricopeptide repeat protein 5 (Homo sapiens (Human)).